The sequence spans 494 residues: GTPase Der (494 aa).

2 consecutive EngA-type G domains span residues Pro-3–Glu-166 and Ile-207–Thr-380. GTP is bound by residues Gly-9–Ser-16, Asp-56–Ile-60, Asn-118–Asp-121, Gly-213–Ser-220, Asp-260–Val-264, and Asn-325–Asp-328. In terms of domain architecture, KH-like spans Lys-381–Glu-465.

The protein belongs to the TRAFAC class TrmE-Era-EngA-EngB-Septin-like GTPase superfamily. EngA (Der) GTPase family. Associates with the 50S ribosomal subunit.

Functionally, GTPase that plays an essential role in the late steps of ribosome biogenesis. The protein is GTPase Der of Yersinia enterocolitica serotype O:8 / biotype 1B (strain NCTC 13174 / 8081).